The sequence spans 550 residues: Coiled-coil domain-containing protein 60 (550 aa).

Positions 1–21 (MTKVPATKKLQSSPNSGAVRP) are disordered. Residues 71–98 (AILREETAKKKKQQQLQKLKEEERNKFQ) are a coiled coil. Disordered regions lie at residues 219–293 (KFKI…EPLY) and 336–367 (AYKE…KKSK). Residues 235-256 (RGSTLSLSRASGGSSPQSSMIS) show a composition bias toward low complexity. Positions 336-345 (AYKEMQTTLK) are enriched in polar residues.

The polypeptide is Coiled-coil domain-containing protein 60 (CCDC60) (Homo sapiens (Human)).